The sequence spans 448 residues: Methylenetetrahydrofolate--tRNA-(uracil-5-)-methyltransferase TrmFO (448 aa).

13-18 (GAGLAG) lines the FAD pocket.

This sequence belongs to the MnmG family. TrmFO subfamily. Requires FAD as cofactor.

Its subcellular location is the cytoplasm. It carries out the reaction uridine(54) in tRNA + (6R)-5,10-methylene-5,6,7,8-tetrahydrofolate + NADH + H(+) = 5-methyluridine(54) in tRNA + (6S)-5,6,7,8-tetrahydrofolate + NAD(+). The enzyme catalyses uridine(54) in tRNA + (6R)-5,10-methylene-5,6,7,8-tetrahydrofolate + NADPH + H(+) = 5-methyluridine(54) in tRNA + (6S)-5,6,7,8-tetrahydrofolate + NADP(+). Its function is as follows. Catalyzes the folate-dependent formation of 5-methyl-uridine at position 54 (M-5-U54) in all tRNAs. This chain is Methylenetetrahydrofolate--tRNA-(uracil-5-)-methyltransferase TrmFO, found in Streptococcus pyogenes serotype M1.